The primary structure comprises 455 residues: UDP-N-acetylmuramoyl-tripeptide--D-alanyl-D-alanine ligase (455 aa).

Position 107-113 (107-113 (GSCGKTS)) interacts with ATP.

It belongs to the MurCDEF family. MurF subfamily.

It localises to the cytoplasm. The catalysed reaction is D-alanyl-D-alanine + UDP-N-acetyl-alpha-D-muramoyl-L-alanyl-gamma-D-glutamyl-meso-2,6-diaminopimelate + ATP = UDP-N-acetyl-alpha-D-muramoyl-L-alanyl-gamma-D-glutamyl-meso-2,6-diaminopimeloyl-D-alanyl-D-alanine + ADP + phosphate + H(+). Its pathway is cell wall biogenesis; peptidoglycan biosynthesis. In terms of biological role, involved in cell wall formation. Catalyzes the final step in the synthesis of UDP-N-acetylmuramoyl-pentapeptide, the precursor of murein. This is UDP-N-acetylmuramoyl-tripeptide--D-alanyl-D-alanine ligase from Buchnera aphidicola subsp. Acyrthosiphon pisum (strain APS) (Acyrthosiphon pisum symbiotic bacterium).